A 376-amino-acid polypeptide reads, in one-letter code: Transmembrane protein 183A (376 aa).

Disordered regions lie at residues 1–20 (MARG…AMPK) and 100–127 (MDAQ…ELDG). The helical transmembrane segment at 300–320 (LNFIFIPIVMGMIFTLFTINV) threads the bilayer.

This sequence belongs to the TMEM183 family.

The protein localises to the membrane. The protein is Transmembrane protein 183A (TMEM183A) of Homo sapiens (Human).